The primary structure comprises 390 residues: Guanine nucleotide-binding protein alpha-7 subunit (390 aa).

Composition is skewed to low complexity over residues 1-12 (MSSTTTNTTTAT) and 22-42 (SSSPQSPSSSTSTLSPPMSPS). The tract at residues 1–42 (MSSTTTNTTTATPAIQVNGNQSSSPQSPSSSTSTLSPPMSPS) is disordered. Residues 70–390 (SELKLLLLGT…TRQTMEEGGI (321 aa)) form the G-alpha domain. Residues 73–86 (KLLLLGTGDSGKST) form a G1 motif region. Residues 78–85 (GTGDSGKS), 213–219 (LYTRVAS), 238–242 (DVAGQ), 307–310 (NKRD), and A363 contribute to the GTP site. S85 contacts Mg(2+). The interval 211 to 219 (DILYTRVAS) is G2 motif. The segment at 234 to 243 (FRMIDVAGQR) is G3 motif. Positions 303–310 (ILFLNKRD) are G4 motif. The G5 motif stretch occupies residues 361–366 (TTATDT).

The protein belongs to the G-alpha family. As to quaternary structure, g proteins are composed of 3 units; alpha, beta and gamma. The alpha chain contains the guanine nucleotide binding site.

Functionally, guanine nucleotide-binding proteins (G proteins) are involved as modulators or transducers in various transmembrane signaling systems. The protein is Guanine nucleotide-binding protein alpha-7 subunit (gpaG) of Dictyostelium discoideum (Social amoeba).